We begin with the raw amino-acid sequence, 207 residues long: A-type ATP synthase subunit E (207 aa).

The protein belongs to the V-ATPase E subunit family. Has multiple subunits with at least A(3), B(3), C, D, E, F, H, I and proteolipid K(x).

The protein localises to the cell membrane. Component of the A-type ATP synthase that produces ATP from ADP in the presence of a proton gradient across the membrane. This is A-type ATP synthase subunit E from Hyperthermus butylicus (strain DSM 5456 / JCM 9403 / PLM1-5).